The primary structure comprises 1174 residues: Protein kinase C-like (1174 aa).

The REM-1 1 domain occupies 1-68 (MANVEETVAN…LRDLDLQRTT (68 aa)). Polar residues predominate over residues 69–84 (SGVDNMSLQPGRSPTN). Residues 69–140 (SGVDNMSLQP…PPPATANKRP (72 aa)) are disordered. The span at 96-123 (GYAQQDQGGYGGPQSQYSQLSGGEALQP) shows a compositional bias: low complexity. Pro residues predominate over residues 124–134 (PRAPFAAPPPA). The REM-1 2 domain occupies 149–226 (KYDTPHLGPR…LKRYEDLHVD (78 aa)). A C2 domain is found at 229-349 (GDGDDNDSLD…MRRKKLETEL (121 aa)). The tract at residues 358–406 (DKMGGHTGIQPDMQFQPPPGQSPAGGPGGGPTPAGVRPPGAPQPQTGPI) is disordered. Gly residues predominate over residues 380-389 (PAGGPGGGPT). Phorbol-ester/DAG-type zinc fingers lie at residues 458-506 (GHKF…VTKC) and 526-576 (PHRF…PDFC). The tract at residues 593–842 (TRRGQSSSGP…PAANTQGTGK (250 aa)) is disordered. The span at 596-611 (GQSSSGPGMSQRTLRP) shows a compositional bias: polar residues. Positions 624-636 (QSPGQPGQESPTQ) are enriched in low complexity. Residues 648 to 657 (SPPPGPPRQP) are compositionally biased toward pro residues. Positions 658–709 (SYPSSATSVDAARASYSTTGTASTGAPTSPTSGSRPPSGPRTQSSVAAAAAA) are enriched in low complexity. The span at 720 to 744 (RSNTDYSPQSGRSSGSGYPTEQRMS) shows a compositional bias: polar residues. The segment covering 786-802 (LPQPPPPQSPPQHPQQP) has biased composition (pro residues). The segment covering 808 to 820 (KMPEQQALTQQPP) has biased composition (polar residues). The 260-residue stretch at 849–1108 (FNFLAVLGKG…AQEIMSHAFF (260 aa)) folds into the Protein kinase domain. ATP is bound by residues 855–863 (LGKGNFGKV) and K878. D974 (proton acceptor) is an active-site residue. The AGC-kinase C-terminal domain maps to 1109–1174 (RNINWDDIYH…RGFSYSADFA (66 aa)).

It belongs to the protein kinase superfamily. AGC Ser/Thr protein kinase family. PKC subfamily.

The catalysed reaction is L-seryl-[protein] + ATP = O-phospho-L-seryl-[protein] + ADP + H(+). It carries out the reaction L-threonyl-[protein] + ATP = O-phospho-L-threonyl-[protein] + ADP + H(+). The sequence is that of Protein kinase C-like (PKC1) from Cochliobolus heterostrophus (Southern corn leaf blight fungus).